A 165-amino-acid chain; its full sequence is uncharacterized protein (165 aa).

The protein belongs to the SixA phosphatase family.

This is an uncharacterized protein from Picosynechococcus sp. (strain ATCC 27264 / PCC 7002 / PR-6) (Agmenellum quadruplicatum).